The primary structure comprises 132 residues: Small ribosomal subunit protein uS8 (132 aa).

Belongs to the universal ribosomal protein uS8 family. As to quaternary structure, part of the 30S ribosomal subunit. Contacts proteins S5 and S12.

Functionally, one of the primary rRNA binding proteins, it binds directly to 16S rRNA central domain where it helps coordinate assembly of the platform of the 30S subunit. This Sinorhizobium medicae (strain WSM419) (Ensifer medicae) protein is Small ribosomal subunit protein uS8.